Reading from the N-terminus, the 228-residue chain is Protein crossbronx homolog (228 aa).

The UBC core domain maps to 14-168 (LQEYKILAEY…VEQCVEDSQR (155 aa)).

Belongs to the ubiquitin-conjugating enzyme family. FTS subfamily.

In Anopheles gambiae (African malaria mosquito), this protein is Protein crossbronx homolog.